The sequence spans 462 residues: tRNA modification GTPase MnmE (462 aa).

(6S)-5-formyl-5,6,7,8-tetrahydrofolate-binding residues include R27, E89, and R128. Positions 223 to 383 constitute a TrmE-type G domain; that stretch reads GLKIAIVGRP…LEAAILAAVG (161 aa). N233 lines the K(+) pocket. GTP contacts are provided by residues 233 to 238, 252 to 258, and 277 to 280; these read NVGKSS, TDLPGTT, and DTAG. A Mg(2+)-binding site is contributed by S237. K(+) contacts are provided by T252, L254, and T257. Position 258 (T258) interacts with Mg(2+). K462 provides a ligand contact to (6S)-5-formyl-5,6,7,8-tetrahydrofolate.

This sequence belongs to the TRAFAC class TrmE-Era-EngA-EngB-Septin-like GTPase superfamily. TrmE GTPase family. As to quaternary structure, homodimer. Heterotetramer of two MnmE and two MnmG subunits. Requires K(+) as cofactor.

Its subcellular location is the cytoplasm. In terms of biological role, exhibits a very high intrinsic GTPase hydrolysis rate. Involved in the addition of a carboxymethylaminomethyl (cmnm) group at the wobble position (U34) of certain tRNAs, forming tRNA-cmnm(5)s(2)U34. This Synechococcus elongatus (strain ATCC 33912 / PCC 7942 / FACHB-805) (Anacystis nidulans R2) protein is tRNA modification GTPase MnmE.